Consider the following 513-residue polypeptide: Light-independent protochlorophyllide reductase subunit B (513 aa).

D36 serves as a coordination point for [4Fe-4S] cluster. D299 (proton donor) is an active-site residue. Position 434-435 (434-435 (GM)) interacts with substrate.

It belongs to the ChlB/BchB/BchZ family. In terms of assembly, protochlorophyllide reductase is composed of three subunits; ChlL, ChlN and ChlB. Forms a heterotetramer of two ChlB and two ChlN subunits. Requires [4Fe-4S] cluster as cofactor.

It is found in the plastid. The protein localises to the chloroplast. It catalyses the reaction chlorophyllide a + oxidized 2[4Fe-4S]-[ferredoxin] + 2 ADP + 2 phosphate = protochlorophyllide a + reduced 2[4Fe-4S]-[ferredoxin] + 2 ATP + 2 H2O. Its pathway is porphyrin-containing compound metabolism; chlorophyll biosynthesis (light-independent). Its function is as follows. Component of the dark-operative protochlorophyllide reductase (DPOR) that uses Mg-ATP and reduced ferredoxin to reduce ring D of protochlorophyllide (Pchlide) to form chlorophyllide a (Chlide). This reaction is light-independent. The NB-protein (ChlN-ChlB) is the catalytic component of the complex. The protein is Light-independent protochlorophyllide reductase subunit B of Chaetosphaeridium globosum (Charophycean green alga).